The primary structure comprises 495 residues: Ectonucleoside triphosphate diphosphohydrolase 8 (495 aa).

At 1-8 (MGLTWKQR) the chain is on the cytoplasmic side. The chain crosses the membrane as a helical span at residues 9-29 (VFTALLGAAAVSGLTALLLVL). Residues 30–466 (VGTMNVLLPP…PAQGWAQSFG (437 aa)) lie on the Extracellular side of the membrane. Cysteine 78 and cysteine 102 form a disulfide bridge. Glutamate 168 (proton acceptor) is an active-site residue. The cysteines at positions 246 and 292 are disulfide-linked. Asparagine 303 and asparagine 324 each carry an N-linked (GlcNAc...) asparagine glycan. Intrachain disulfides connect cysteine 328/cysteine 334 and cysteine 380/cysteine 403. Residues 467-487 (VWAAGVVFVVLTLAATLGAVA) form a helical membrane-spanning segment. Topologically, residues 488–495 (VQVFWLQD) are cytoplasmic.

Belongs to the GDA1/CD39 NTPase family. Ca(2+) is required as a cofactor. Mg(2+) serves as cofactor. N-glycosylated.

The protein resides in the cell membrane. It carries out the reaction a ribonucleoside 5'-triphosphate + 2 H2O = a ribonucleoside 5'-phosphate + 2 phosphate + 2 H(+). Its function is as follows. Canalicular ectonucleoside NTPDase responsible for the main hepatic NTPDase activity. Ectonucleoside NTPDases catalyze the hydrolysis of gamma- and beta-phosphate residues of nucleotides, playing a central role in concentration of extracellular nucleotides. Has activity toward ATP, ADP, UTP and UDP, but not toward AMP. In Bos taurus (Bovine), this protein is Ectonucleoside triphosphate diphosphohydrolase 8 (ENTPD8).